The sequence spans 513 residues: ATP synthase subunit beta (513 aa).

The disordered stretch occupies residues 1 to 29 (MATAPATEKKAPAKKAAAPKAAAPKKAAA). A compositionally biased stretch (low complexity) spans 14–29 (KKAAAPKAAAPKKAAA). 186-193 (GGAGVGKT) provides a ligand contact to ATP.

It belongs to the ATPase alpha/beta chains family. In terms of assembly, F-type ATPases have 2 components, CF(1) - the catalytic core - and CF(0) - the membrane proton channel. CF(1) has five subunits: alpha(3), beta(3), gamma(1), delta(1), epsilon(1). CF(0) has three main subunits: a(1), b(2) and c(9-12). The alpha and beta chains form an alternating ring which encloses part of the gamma chain. CF(1) is attached to CF(0) by a central stalk formed by the gamma and epsilon chains, while a peripheral stalk is formed by the delta and b chains.

Its subcellular location is the cell inner membrane. It carries out the reaction ATP + H2O + 4 H(+)(in) = ADP + phosphate + 5 H(+)(out). Its function is as follows. Produces ATP from ADP in the presence of a proton gradient across the membrane. The catalytic sites are hosted primarily by the beta subunits. This is ATP synthase subunit beta from Sphingopyxis alaskensis (strain DSM 13593 / LMG 18877 / RB2256) (Sphingomonas alaskensis).